Consider the following 240-residue polypeptide: MAPKNGTVQEKKFFSKELNEEMTLLVYLPSNYSPLYKYHVIIAQDGHDYFRLGRIGRQVEELLSKREIDRSIIIGVPYKDVKERRNTYHPEGSKFSAYKRFIAHELVPFADDEYPTYQIGYGRTLIGDSLGATVSLMTALDYPNMFGNIIMQSPYVDKHVLEAVKQSDDIKHLSIYHQIGTKETDVHTTDGNILDFTEPNRELKQLLEKKLSDYDFEPFDGDHKWTYWQPLITPALKKML.

This is an uncharacterized protein from Bacillus subtilis (strain 168).